We begin with the raw amino-acid sequence, 1476 residues long: Cystic fibrosis transmembrane conductance regulator (1476 aa).

The Cytoplasmic segment spans residues 1–77 (MQKSPLEKAS…QLIHALRRCF (77 aa)). The helical transmembrane segment at 78-98 (VWRFVFYGVLLYLGEVTKAVQ) threads the bilayer. Positions 81–365 (FVFYGVLLYL…TAVQIWYDSL (285 aa)) constitute an ABC transmembrane type-1 1 domain. Over 99-122 (PVLLGRIIASYDPDNTEERSIAIY) the chain is Extracellular. Residues 123-146 (LGIGLCLLFIVRTLLLHPAIFGLH) form a helical membrane-spanning segment. Topologically, residues 147-195 (HIGMQMRIAMFSLIYKKTLKLSSRVLDKISIGQLISLLSNNLNKFDEGL) are cytoplasmic. A helical membrane pass occupies residues 196–216 (ALAHFIWIAPLQVVLLMGLLW). The Extracellular segment spans residues 217 to 222 (DLLQFS). The helical transmembrane segment at 223–243 (AFCGLGLLIVLVIFQAILGKM) threads the bilayer. At 244–298 (MVKYRDKRAAKINERLVITSEVIDNIYSVKAYCWESAMEKIIESLREEELKMTRR) the chain is on the cytoplasmic side. A helical membrane pass occupies residues 299-319 (SAYMRFFTSSAFFFSGFFVVF). Over 320-339 (LSVLPYTVINGIVLRKIFTT) the chain is Extracellular. A helical transmembrane segment spans residues 340-358 (ISFCIVLRMSVTRQFPTAV). The Cytoplasmic segment spans residues 359–853 (QIWYDSLGMI…YLRYFTLHRG (495 aa)). Residues Trp-401, 458–465 (GSTGAGKT), and Gln-493 contribute to the ATP site. The 235-residue stretch at 412 to 646 (VQLNNDDRKT…RPDFSSKLMG (235 aa)) folds into the ABC transporter 1 domain. Residue Cys-524 is the site of S-palmitoyl cysteine attachment. Residues Ser-549 and Ser-660 each carry the phosphoserine modification. The disordered R region stretch occupies residues 654 to 826 (TEERRSSILT…EEINEEDLKE (173 aa)). Position 670 is a phosphoserine; by PKA (Ser-670). A phosphoserine mark is found at Ser-684, Ser-698, and Ser-710. Thr-715 carries the phosphothreonine modification. Phosphoserine occurs at positions 732, 763, 785, 790, and 808. A helical transmembrane segment spans residues 854 to 874 (LFAVLIWCVLVFLVEVAASLF). Residues 854–1153 (LFAVLIWCVL…SSIDTDSLMR (300 aa)) enclose the ABC transmembrane type-1 2 domain. Residues 875 to 913 (VLWLLKNNPVNGGNNGTKIANTSYVVVITSSSFYYIFYI) are Extracellular-facing. N-linked (GlcNAc...) asparagine glycans are attached at residues Asn-889 and Asn-895. The discontinuously helical transmembrane segment at 914-934 (YVGVADTLLALSLFRGLPLVH) threads the bilayer. The Cytoplasmic segment spans residues 935–985 (TLITASKILHRKMLHSILHAPMSTFNKLKAGGILNRFSKDIAILDDFLPLT). Residues 986–1006 (IFDFIQLLFIVVGAIIVVSAL) traverse the membrane as a helical segment. The Extracellular segment spans residues 1007-1008 (QP). The helical transmembrane segment at 1009–1029 (YIFLATVPGLAVFILLRAYFL) threads the bilayer. Topologically, residues 1030–1090 (HTSQQLKQLE…TANWFMYLAT (61 aa)) are cytoplasmic. Residues 1091–1111 (LRWFQMRIDMIFVLFFIVVTF) traverse the membrane as a helical segment. Residues 1112 to 1125 (ISILTTGEGEGTTG) are Extracellular-facing. A helical membrane pass occupies residues 1126 to 1146 (IILTLAMNIMSTLQWAVNSSI). At 1147–1476 (DTDSLMRSVS…TEEEVQETRL (330 aa)) the chain is on the cytoplasmic side. Residues 1208-1439 (VKDLTVKYVD…KSVFQRALSS (232 aa)) form the ABC transporter 2 domain. Residues Tyr-1215 and 1240–1247 (GRTGSGKS) each bind ATP. The interval 1382-1476 (RVLRQAFAGC…TEEEVQETRL (95 aa)) is interaction with GORASP2. Cys-1391 is lipidated: S-palmitoyl cysteine. 2 positions are modified to phosphoserine: Ser-1440 and Ser-1452. Residues 1445-1456 (LFHGRHSSKQKP) show a composition bias toward basic residues. Positions 1445 to 1476 (LFHGRHSSKQKPRTQITAVKEETEEEVQETRL) are disordered. Positions 1466–1476 (ETEEEVQETRL) are enriched in acidic residues. Positions 1474–1476 (TRL) match the PDZ-binding motif.

It belongs to the ABC transporter superfamily. ABCC family. CFTR transporter (TC 3.A.1.202) subfamily. As to quaternary structure, monomer; does not require oligomerization for channel activity. May form oligomers in the membrane. Interacts with SLC4A7 through NHERF1. Interacts with SHANK2. Interacts with NHERF1 and MYO6. Interacts (via C-terminus) with GOPC (via PDZ domain); this promotes CFTR internalization and thereby decreases channel activity. Interacts with SLC4A7 through NHERF1. Found in a complex with MYO5B and RAB11A. Interacts with ANO1. Interacts with SLC26A8. Interacts with AHCYL1; the interaction increases CFTR activity. Interacts with CSE1L. The core-glycosylated form interacts with GORASP2 (via PDZ GRASP-type 1 domain) in respone to ER stress. Interacts with MARCHF2; the interaction leads to CFTR ubiqtuitination and degradation. Interacts with ADGRG2. N-glycosylated. In terms of processing, phosphorylated; cAMP treatment promotes phosphorylation and activates the channel. Dephosphorylation decreases the ATPase activity (in vitro). Phosphorylation at PKA sites activates the channel. Phosphorylation at PKC sites enhances the response to phosphorylation by PKA. Phosphorylated by AMPK; this inhibits channel activity. Post-translationally, ubiquitinated, leading to its degradation in the lysosome. Deubiquitination by USP10 in early endosomes enhances its endocytic recycling to the cell membrane. Ubiquitinated by RNF185 during ER stress. Ubiquitinated by MARCHF2. In terms of tissue distribution, detected in epithelial cells in nasopharynx, submandibular gland, pancreas and ileum (at protein level). Expressed in the epididymis. In the caput section of the epididymis, expressed uniformly on both the luminal and basolateral sides of the ducts and on sperm in the caput lumen (at protein level). In the cauda, detected along the luminal border but not continuously and is also expressed on the basolateral surface. Within the caudal lumen, detected on sperm.

It is found in the apical cell membrane. The protein resides in the early endosome membrane. Its subcellular location is the cell membrane. It localises to the recycling endosome membrane. The protein localises to the endoplasmic reticulum membrane. It is found in the nucleus. The enzyme catalyses ATP + H2O + closed Cl(-) channel = ADP + phosphate + open Cl(-) channel.. It catalyses the reaction chloride(in) = chloride(out). The catalysed reaction is hydrogencarbonate(in) = hydrogencarbonate(out). It carries out the reaction ATP + H2O = ADP + phosphate + H(+). Epithelial ion channel that plays an important role in the regulation of epithelial ion and water transport and fluid homeostasis. Mediates the transport of chloride ions across the cell membrane. Possesses an intrinsic ATPase activity and utilizes ATP to gate its channel; the passive flow of anions through the channel is gated by cycles of ATP binding and hydrolysis by the ATP-binding domains. The ion channel is also permeable to HCO(3)(-); selectivity depends on the extracellular chloride concentration. Exerts its function also by modulating the activity of other ion channels and transporters. Contributes to the regulation of the pH and the ion content of the epithelial fluid layer. Modulates the activity of the epithelial sodium channel (ENaC) complex, in part by regulating the cell surface expression of the ENaC complex. May regulate bicarbonate secretion and salvage in epithelial cells by regulating the transporter SLC4A7. Can inhibit the chloride channel activity of ANO1. Plays a role in the chloride and bicarbonate homeostasis during sperm epididymal maturation and capacitation. The protein is Cystic fibrosis transmembrane conductance regulator of Rattus norvegicus (Rat).